The primary structure comprises 723 residues: ADP-ribosylation factor-binding protein GGA3 (723 aa).

Positions 1 to 313 (MAEAEGESLE…GEVATLTLPD (313 aa)) are binds to ARF1 (in long isoform). One can recognise a VHS domain in the interval 16-146 (ATNPSNRQED…MLKRQGIVQS (131 aa)). Residues Ser-159 and Ser-275 each carry the phosphoserine modification. A GAT domain is found at 171–298 (DEEKSKLLAK…VINSYKTIIE (128 aa)). The interval 299–593 (GQVINGEVAT…IHVPLESIKP (295 aa)) is unstructured hinge. A disordered region spans residues 339 to 384 (SSVLAPAPTPPSSGIPILPPPPQASGPPRSRSSSQAEATLGPSSTS). Over residues 345–363 (APTPPSSGIPILPPPPQAS) the composition is skewed to pro residues. The span at 364–374 (GPPRSRSSSQA) shows a compositional bias: low complexity. Residues 391 to 395 (DEELL) carry the DXXLL motif. The interval 428–464 (DFFSPRPGTAACGASDAPLLQPSAPSSSSSQAPLPPP) is disordered. A compositionally biased stretch (low complexity) spans 441-459 (ASDAPLLQPSAPSSSSSQA). Residues 594–715 (SSALPVTAYD…TEVGEVDQFP (122 aa)) form the GAE domain.

Belongs to the GGA protein family. In terms of assembly, monomer. Interacts with GGA1 and GGA2. Binds to clathrin and activated ARFs, such as ARF1, ARF5 and ARF6. Binds RABEP1 and RABGEF1. Interacts with the membrane proteins M6PR/CD-MPR and IGF2R/CI-MPR and the accessory proteins SYNRG, EPN4, NECAP1, NECAP2 and AFTPH/aftiphilin. Interacts with TSG101 and UBC. Interacts with ADRA2B. Interacts with NTRK1; the interaction is independent of NTRK1 activation and ubiquitination. Interacts (via VHS domain) with BACE1 (via DXXLL motif). In terms of processing, phosphorylated by CK2 and dephosphorylated by PP2A. Phosphorylation of GGA3 allows the internal DXXLL motif to bind the VHS domain and to inhibit the recognition of cargo signals. Ubiquitinated. Post-translationally, proteolytically cleaved during apoptosis by CASP3. In terms of tissue distribution, ubiquitously expressed.

Its subcellular location is the golgi apparatus. It is found in the trans-Golgi network membrane. It localises to the endosome membrane. The protein resides in the early endosome membrane. The protein localises to the recycling endosome membrane. Plays a role in protein sorting and trafficking between the trans-Golgi network (TGN) and endosomes. Mediates the ARF-dependent recruitment of clathrin to the TGN and binds ubiquitinated proteins and membrane cargo molecules with a cytosolic acidic cluster-dileucine (DXXLL) motif. Mediates export of the GPCR receptor ADRA2B to the cell surface. nvolved in BACE1 transport and sorting as well as regulation of BACE1 protein levels. Regulates retrograde transport of BACE1 from endosomes to the trans-Golgi network via interaction through the VHS motif and dependent of BACE1 phosphorylation. Modulates BACE1 protein levels independently of the interaction between VHS domain and DXXLL motif through recognition of ubiquitination. Key player in a novel DXXLL-mediated endosomal sorting machinery to the recycling pathway that targets NTRK1 to the plasma membrane. This chain is ADP-ribosylation factor-binding protein GGA3, found in Homo sapiens (Human).